The chain runs to 157 residues: ATP synthase subunit b (157 aa).

A helical transmembrane segment spans residues 7–29 (LISQAIAFSLFILFTARFVWPYL).

This sequence belongs to the ATPase B chain family. F-type ATPases have 2 components, F(1) - the catalytic core - and F(0) - the membrane proton channel. F(1) has five subunits: alpha(3), beta(3), gamma(1), delta(1), epsilon(1). F(0) has three main subunits: a(1), b(2) and c(10-14). The alpha and beta chains form an alternating ring which encloses part of the gamma chain. F(1) is attached to F(0) by a central stalk formed by the gamma and epsilon chains, while a peripheral stalk is formed by the delta and b chains.

The protein localises to the cell inner membrane. F(1)F(0) ATP synthase produces ATP from ADP in the presence of a proton or sodium gradient. F-type ATPases consist of two structural domains, F(1) containing the extramembraneous catalytic core and F(0) containing the membrane proton channel, linked together by a central stalk and a peripheral stalk. During catalysis, ATP synthesis in the catalytic domain of F(1) is coupled via a rotary mechanism of the central stalk subunits to proton translocation. Its function is as follows. Component of the F(0) channel, it forms part of the peripheral stalk, linking F(1) to F(0). In Nitrosomonas europaea (strain ATCC 19718 / CIP 103999 / KCTC 2705 / NBRC 14298), this protein is ATP synthase subunit b.